The chain runs to 280 residues: Small ribosomal subunit protein uS2 (280 aa).

Belongs to the universal ribosomal protein uS2 family.

This chain is Small ribosomal subunit protein uS2, found in Desulforapulum autotrophicum (strain ATCC 43914 / DSM 3382 / VKM B-1955 / HRM2) (Desulfobacterium autotrophicum).